Consider the following 314-residue polypeptide: Formimidoylglutamase (314 aa).

Residues His127, Asp153, His155, Asp157, Asp245, and Asp247 each contribute to the Mn(2+) site.

Belongs to the arginase family. Requires Mn(2+) as cofactor.

The catalysed reaction is N-formimidoyl-L-glutamate + H2O = formamide + L-glutamate. Its pathway is amino-acid degradation; L-histidine degradation into L-glutamate; L-glutamate from N-formimidoyl-L-glutamate (hydrolase route): step 1/1. Its function is as follows. Catalyzes the conversion of N-formimidoyl-L-glutamate to L-glutamate and formamide. This Aeromonas hydrophila subsp. hydrophila (strain ATCC 7966 / DSM 30187 / BCRC 13018 / CCUG 14551 / JCM 1027 / KCTC 2358 / NCIMB 9240 / NCTC 8049) protein is Formimidoylglutamase.